Here is an 877-residue protein sequence, read N- to C-terminus: MENKDRLLLIDGSSVAFRAFFALYNQIDRFKAPNGLHTNAIFAFHTMLSSLMERIEPTHVLIAFDAGKTTFRTEMFADYKGGRSKTPDEFREQLPFIKEMIEKLGIRHYELANYEADDIIGTLDKMAEAPNVNFDVTIVTGDKDMIQLVDGNTRVEISKKGVAEFEEFTPDYLLEKMGLTPAQFIDLKALMGDSSDNYPGVTKVGEKTGLKLLQEFGSLENLYENVDSLKASKMKENLIADKEMAFLSQQLATINTKAPIEIGLDDTLLKGKKVDELSQFYDEMGFAQFKSKLLAEAGGEVTDEKVVDEIDFEIVTDGSISEKVNADDFFYLETLGENYHREQIVAFAWGNAEKIYVSKNIDLLTKMKFPENTYDFKKNRVLLSHLDIELPLVKFDAMLAKYLISTTEDNKISTIARLFNSGHLATDEEIFGKGTKIALPDDAVLFEHLARKIKVLALAKEKMMAELLENEQEHLLSDMELPLAEVLAKMEITGIAVSQNTLEEIGAENEEKLASLTREIYDLAGEEFNINSPKQLGVILFEKLQLPVGKKTKTGYSTAVDVLEDLAALSPVVAKILEYRQINKVQSTYVKGLIPQIADDGKIHTRYVQDLTQTGRLSSVDPNLQNIPVRLEEGRKIRKAFVPSKDSLLLSSDYSQIELRVLAHISGDEHLIDAFKHGADIHTSTAMRVFGIEKAEDVTANDRRNAKAVNFGVVYGISDFGLARNLGITRKDAKNYIETYFERYPGIKTYMENIVREARDKGFVETMSHRRRKIPDINARNFNVRGFAERTAINSPIQGSAADILKIAMINLDKALSARDFKSKLLLQVHDEIILDVPLEELDEIKVLVKQTMEEAIELAVPLKVDENTGKTWYEAK.

Residues 180 to 270 form the 5'-3' exonuclease domain; it reads TPAQFIDLKA…EIGLDDTLLK (91 aa). Residues 308–468 enclose the 3'-5' exonuclease domain; that stretch reads DEIDFEIVTD…AKEKMMAELL (161 aa).

Belongs to the DNA polymerase type-A family. As to quaternary structure, single-chain monomer with multiple functions.

It carries out the reaction DNA(n) + a 2'-deoxyribonucleoside 5'-triphosphate = DNA(n+1) + diphosphate. Functionally, in addition to polymerase activity, this DNA polymerase exhibits 3'-5' and 5'-3' exonuclease activity. This Lactococcus lactis subsp. lactis (strain IL1403) (Streptococcus lactis) protein is DNA polymerase I (polA).